Here is a 135-residue protein sequence, read N- to C-terminus: MKPSERRKARRLAVQAIYSWQLSGNNIADVEHEFLTEQDVAGVDIAYFRELLGGVATKKSQLDELITPFLTRPLDEVDPVEKAIVRIATYELTFRKDVPYKVAINEAIELAKAFGAEDGHKFVNGILDKLVARNR.

It belongs to the NusB family.

Involved in transcription antitermination. Required for transcription of ribosomal RNA (rRNA) genes. Binds specifically to the boxA antiterminator sequence of the ribosomal RNA (rrn) operons. This chain is Transcription antitermination protein NusB, found in Shewanella halifaxensis (strain HAW-EB4).